The following is a 179-amino-acid chain: MGLFFSKISSFMFPNIECRTLMLGLDGAGKTTILYKLKLNETVNTIPTIGFNVETVTFQKITLTVWDVGGQKKIRALWKYYFPNTTTLVFVVDSSDIERIPEAKEELFSLLAEPELADSHLLVFANKQDMPNARSPAELTQLLDLGSLKNREWFICGTNAHSGQGLYEGLMWVKKQMKT.

Glycine 2 carries the N-myristoyl glycine lipid modification. Residues 3–16 form an important for the stable binding to the membranes region; the sequence is LFFSKISSFMFPNI. Residues 24 to 32, 126 to 129, and alanine 160 contribute to the GTP site; these read GLDGAGKTT and NKQD.

It belongs to the small GTPase superfamily. Arf family.

Its subcellular location is the golgi apparatus membrane. The enzyme catalyses GTP + H2O = GDP + phosphate + H(+). With respect to regulation, alternates between an inactive GDP-bound form and an active GTP-bound form. Activated by a guanine nucleotide-exchange factor (GEF) and inactivated by GTPase-activating protein (GAP). Its function is as follows. Small GTPase involved in protein trafficking between different compartments. Modulates vesicle budding and uncoating within the Golgi complex. In its GTP-bound form, triggers the recruitment of coatomer proteins to the Golgi membrane. The hydrolysis of ARF1-bound GTP, which is mediated by ARFGAPs proteins, is required for dissociation of coat proteins from Golgi membranes and vesicles. This chain is ADP-ribosylation factor 1-like 1 (arf-1.1), found in Caenorhabditis elegans.